Here is a 275-residue protein sequence, read N- to C-terminus: MGLRKYKPATPGVRFMIRNDFSGLTKKEPEKSLLVPLKKTGGRNHYGRITVRFRGGGHKRQYRLIDFKRDKIGIPAKVSAIEYDPNRSARIALLVYADGEKRYILAPNGLQVGDTVLSGIDAEIRVGNALPLENIPLGTLLHNVEIRPGSGGKIARSAGVSCQLMAKEGNYALLRMPSGELRKVHIKCYATIGVVGNEDHKNEVFGKAGRTRWIGRKPHVRGMVMNPVDHPMGGGEGRGKGQHPVTPWGMPTKGYKTRRGRRASDKFIVRRRNQV.

The segment at 236–263 (EGRGKGQHPVTPWGMPTKGYKTRRGRRA) is disordered.

This sequence belongs to the universal ribosomal protein uL2 family. Part of the 50S ribosomal subunit. Forms a bridge to the 30S subunit in the 70S ribosome.

One of the primary rRNA binding proteins. Required for association of the 30S and 50S subunits to form the 70S ribosome, for tRNA binding and peptide bond formation. It has been suggested to have peptidyltransferase activity; this is somewhat controversial. Makes several contacts with the 16S rRNA in the 70S ribosome. In Pseudothermotoga lettingae (strain ATCC BAA-301 / DSM 14385 / NBRC 107922 / TMO) (Thermotoga lettingae), this protein is Large ribosomal subunit protein uL2.